Consider the following 472-residue polypeptide: Transmembrane protein 8B (472 aa).

A disordered region spans residues M1–W36. Topologically, residues M1–L233 are extracellular. Residues N92 and N100 are each glycosylated (N-linked (GlcNAc...) asparagine). The region spanning F182–T221 is the EGF-like domain. 3 cysteine pairs are disulfide-bonded: C186–C196, C190–C209, and C211–C220. The helical transmembrane segment at L234–I254 threads the bilayer. Over R255–R257 the chain is Cytoplasmic. A helical transmembrane segment spans residues Y258–A277. Topologically, residues C278–D292 are extracellular. A helical membrane pass occupies residues V293–M313. Residues A314–R315 lie on the Cytoplasmic side of the membrane. A helical transmembrane segment spans residues L316–L336. The Extracellular segment spans residues Q337–G342. The chain crosses the membrane as a helical span at residues L343–V363. Residues R364–W379 lie on the Cytoplasmic side of the membrane. A helical membrane pass occupies residues L380–V400. The Extracellular portion of the chain corresponds to E401–N405. Residues Y406–P426 traverse the membrane as a helical segment. The Cytoplasmic segment spans residues P427–S472.

The protein belongs to the TMEM8 family. In terms of assembly, isoform 2 (via its cytoplasmic part) interacts with EZR. Post-translationally, isoform 2 is N-glycosylated.

The protein localises to the cell membrane. It localises to the cytoplasm. It is found in the nucleus. Its subcellular location is the mitochondrion. The protein resides in the endoplasmic reticulum. May function as a regulator of the EGFR pathway. Probable tumor suppressor which may function in cell growth, proliferation and adhesion. This Homo sapiens (Human) protein is Transmembrane protein 8B (TMEM8B).